The primary structure comprises 329 residues: MSKNLLDQLREVTVVVADTGDIEAIEKFKPRDATTNPSLITAAAQMPQYQDIVDDTLKGARQTLGPGASAAQVANRAFDRLAVSFGLKILQIIEGRVSTEVDARLSYDTEGTIEKAREIIKQYEAAGVSKERVLIKIAATWEGIEAAAVLEKEGIHCNLTLLFGLHQAIACAENGITLISPFVGRILDWYKKDTGRESYAPHEDPGVLSVTQIYNYYKKFGYKTEVMGASFRNIGEITELAGCDLLTIAPSLLAELQATEGELPRKLDPAKAKDYPIEKIHVNKYTFDKMHAENRMATEKLEEGIQGFTKALEQLEKLLADRLAHLEAA.

The active-site Schiff-base intermediate with substrate is the K136.

It belongs to the transaldolase family. Type 1 subfamily. In terms of assembly, homodimer.

Its subcellular location is the cytoplasm. It catalyses the reaction D-sedoheptulose 7-phosphate + D-glyceraldehyde 3-phosphate = D-erythrose 4-phosphate + beta-D-fructose 6-phosphate. The protein operates within carbohydrate degradation; pentose phosphate pathway; D-glyceraldehyde 3-phosphate and beta-D-fructose 6-phosphate from D-ribose 5-phosphate and D-xylulose 5-phosphate (non-oxidative stage): step 2/3. In terms of biological role, transaldolase is important for the balance of metabolites in the pentose-phosphate pathway. This chain is Transaldolase, found in Methylococcus capsulatus (strain ATCC 33009 / NCIMB 11132 / Bath).